The primary structure comprises 365 residues: Phospho-N-acetylmuramoyl-pentapeptide-transferase (365 aa).

The next 9 membrane-spanning stretches (helical) occupy residues 47 to 67 (LLAL…VVPL), 92 to 112 (PTMG…ILAG), 114 to 134 (SPLV…GWLD), 153 to 173 (LCLQ…QQGW), 180 to 200 (ITLP…LAVF), 215 to 235 (LDGL…LWLA), 239 to 259 (PAIA…LLHN), 281 to 301 (AIAI…LFVL), and 344 to 364 (TQVV…CWLL).

It belongs to the glycosyltransferase 4 family. MraY subfamily. It depends on Mg(2+) as a cofactor.

Its subcellular location is the cell inner membrane. The enzyme catalyses UDP-N-acetyl-alpha-D-muramoyl-L-alanyl-gamma-D-glutamyl-meso-2,6-diaminopimeloyl-D-alanyl-D-alanine + di-trans,octa-cis-undecaprenyl phosphate = di-trans,octa-cis-undecaprenyl diphospho-N-acetyl-alpha-D-muramoyl-L-alanyl-D-glutamyl-meso-2,6-diaminopimeloyl-D-alanyl-D-alanine + UMP. It participates in cell wall biogenesis; peptidoglycan biosynthesis. Functionally, catalyzes the initial step of the lipid cycle reactions in the biosynthesis of the cell wall peptidoglycan: transfers peptidoglycan precursor phospho-MurNAc-pentapeptide from UDP-MurNAc-pentapeptide onto the lipid carrier undecaprenyl phosphate, yielding undecaprenyl-pyrophosphoryl-MurNAc-pentapeptide, known as lipid I. This chain is Phospho-N-acetylmuramoyl-pentapeptide-transferase, found in Synechococcus elongatus (strain ATCC 33912 / PCC 7942 / FACHB-805) (Anacystis nidulans R2).